We begin with the raw amino-acid sequence, 322 residues long: Tropinone reductase homolog At2g29260, chloroplastic (322 aa).

Residues 1–61 (MVLDMASHLY…YASQSSIAIT (61 aa)) constitute a chloroplast transit peptide. 74–98 (LVTGGTRGIGRAIVEELAGLGAEVH) contributes to the NADP(+) binding site. S207 serves as a coordination point for substrate.

Belongs to the short-chain dehydrogenases/reductases (SDR) family. SDR65C subfamily.

The protein localises to the plastid. It is found in the chloroplast. This is Tropinone reductase homolog At2g29260, chloroplastic from Arabidopsis thaliana (Mouse-ear cress).